The sequence spans 130 residues: Small ribosomal subunit protein uS8 (130 aa).

This sequence belongs to the universal ribosomal protein uS8 family. As to quaternary structure, part of the 30S ribosomal subunit. Contacts proteins S5 and S12.

In terms of biological role, one of the primary rRNA binding proteins, it binds directly to 16S rRNA central domain where it helps coordinate assembly of the platform of the 30S subunit. This is Small ribosomal subunit protein uS8 from Erwinia tasmaniensis (strain DSM 17950 / CFBP 7177 / CIP 109463 / NCPPB 4357 / Et1/99).